Here is a 143-residue protein sequence, read N- to C-terminus: Large ribosomal subunit protein uL16 (143 aa).

Belongs to the universal ribosomal protein uL16 family. In terms of assembly, part of the 50S ribosomal subunit.

Its function is as follows. Binds 23S rRNA and is also seen to make contacts with the A and possibly P site tRNAs. This chain is Large ribosomal subunit protein uL16, found in Oenococcus oeni (strain ATCC BAA-331 / PSU-1).